The primary structure comprises 729 residues: Rho GTPase-activating protein 28 (729 aa).

Disordered stretches follow at residues 20–42 (AQPPNAESRCAPRAAASHPLSRK) and 55–105 (SNES…AEVT). The span at 65–75 (SRSNSEASVDS) shows a compositional bias: polar residues. S72 carries the phosphoserine modification. Basic and acidic residues predominate over residues 80 to 89 (DFWREIESIK). T159 bears the Phosphothreonine mark. Residues 176–236 (GVSESPPRDT…SQDKEGSFAV (61 aa)) form a disordered region. The segment covering 195–204 (GTKEERELPR) has biased composition (basic and acidic residues). A compositionally biased stretch (polar residues) spans 217-226 (SLNSTTLSDA). In terms of domain architecture, Rho-GAP spans 380–577 (VPLTVLLDGD…LMLKYQKILW (198 aa)). Residues 612-631 (TLERETASPKTSKVLQKSPS) are disordered. Positions 619-630 (SPKTSKVLQKSP) are enriched in polar residues.

In terms of tissue distribution, expressed in testis. Expressed at moderate level in kidney and ovary, and weakly expressed in spleen and skeletal muscle.

In terms of biological role, GTPase activator for the Rho-type GTPases by converting them to an inactive GDP-bound state. This is Rho GTPase-activating protein 28 (ARHGAP28) from Homo sapiens (Human).